Reading from the N-terminus, the 445-residue chain is Potassium/proton antiporter CemA (445 aa).

The next 4 membrane-spanning stretches (helical) occupy residues 44–64 (MQVS…VNIC), 330–350 (ALTC…ILIL), 368–388 (LIII…GWKL), and 405–425 (FILC…KYWI).

Belongs to the CemA family.

It is found in the plastid. Its subcellular location is the chloroplast inner membrane. The catalysed reaction is K(+)(in) + H(+)(out) = K(+)(out) + H(+)(in). Functionally, contributes to K(+)/H(+) antiport activity by supporting proton efflux to control proton extrusion and homeostasis in chloroplasts in a light-dependent manner to modulate photosynthesis. Prevents excessive induction of non-photochemical quenching (NPQ) under continuous-light conditions. Indirectly promotes efficient inorganic carbon uptake into chloroplasts. In Pleurastrum terricola (Filamentous green alga), this protein is Potassium/proton antiporter CemA.